The primary structure comprises 397 residues: Elongation factor Tu (397 aa).

A tr-type G domain is found at 10–207; sequence LPHVNVGTIG…TLDSYIPDPV (198 aa). The tract at residues 19 to 26 is G1; that stretch reads GHVDHGKT. Residue 19–26 coordinates GTP; it reads GHVDHGKT. Thr-26 is a binding site for Mg(2+). Positions 60-64 are G2; that stretch reads GITIN. The segment at 81–84 is G3; sequence DCPG. GTP contacts are provided by residues 81–85 and 136–139; these read DCPGH and NKAD. The tract at residues 136 to 139 is G4; that stretch reads NKAD. The tract at residues 174–176 is G5; that stretch reads SAR.

It belongs to the TRAFAC class translation factor GTPase superfamily. Classic translation factor GTPase family. EF-Tu/EF-1A subfamily. As to quaternary structure, monomer.

It localises to the cytoplasm. It catalyses the reaction GTP + H2O = GDP + phosphate + H(+). Functionally, GTP hydrolase that promotes the GTP-dependent binding of aminoacyl-tRNA to the A-site of ribosomes during protein biosynthesis. The chain is Elongation factor Tu from Pseudomonas fluorescens (strain SBW25).